The chain runs to 40 residues: Photosystem II reaction center protein Psb30 (40 aa).

A helical transmembrane segment spans residues 12-32 (VIFQLTSVALIIIAGPAVIFV).

The protein belongs to the Psb30/Ycf12 family. As to quaternary structure, PSII is composed of 1 copy each of membrane proteins PsbA, PsbB, PsbC, PsbD, PsbE, PsbF, PsbH, PsbI, PsbJ, PsbK, PsbL, PsbM, PsbT, PsbX, PsbY, PsbZ, Psb30/Ycf12, peripheral proteins PsbO, CyanoQ (PsbQ), PsbU, PsbV and a large number of cofactors. It forms dimeric complexes.

The protein localises to the cellular thylakoid membrane. In terms of biological role, a core subunit of photosystem II (PSII), probably helps stabilize the reaction center. The polypeptide is Photosystem II reaction center protein Psb30 (Nostoc sp. (strain PCC 7120 / SAG 25.82 / UTEX 2576)).